Here is a 129-residue protein sequence, read N- to C-terminus: Small ribosomal subunit protein uS11 (129 aa).

The protein belongs to the universal ribosomal protein uS11 family. Part of the 30S ribosomal subunit. Interacts with proteins S7 and S18. Binds to IF-3.

Its function is as follows. Located on the platform of the 30S subunit, it bridges several disparate RNA helices of the 16S rRNA. Forms part of the Shine-Dalgarno cleft in the 70S ribosome. This is Small ribosomal subunit protein uS11 from Bradyrhizobium sp. (strain BTAi1 / ATCC BAA-1182).